The following is a 218-amino-acid chain: Serine/threonine-protein phosphatase 1 (218 aa).

Positions 24, 26, 53, and 79 each coordinate Mn(2+). Catalysis depends on His-80, which acts as the Proton donor. His-187 is a binding site for Mn(2+).

It belongs to the PPP phosphatase family. PP-1 subfamily. The cofactor is Mn(2+).

The enzyme catalyses O-phospho-L-seryl-[protein] + H2O = L-seryl-[protein] + phosphate. It carries out the reaction O-phospho-L-threonyl-[protein] + H2O = L-threonyl-[protein] + phosphate. Functionally, plays a key role in signaling protein misfolding via the CpxR/CPXA transducing system. It also modulates the phosphorylated status of many phosphoproteins in E.coli, some of which acting as major chaperones. Has been shown, in vitro, to act on Ser, Thr and Tyr-phosphorylated substrates. The chain is Serine/threonine-protein phosphatase 1 (pphA) from Escherichia coli (strain K12).